Consider the following 553-residue polypeptide: Formate--tetrahydrofolate ligase (553 aa).

ATP is bound at residue 63 to 70; it reads TPAGEGKT.

It belongs to the formate--tetrahydrofolate ligase family.

The catalysed reaction is (6S)-5,6,7,8-tetrahydrofolate + formate + ATP = (6R)-10-formyltetrahydrofolate + ADP + phosphate. It participates in one-carbon metabolism; tetrahydrofolate interconversion. This Oenococcus oeni (strain ATCC BAA-331 / PSU-1) protein is Formate--tetrahydrofolate ligase.